The sequence spans 241 residues: Carboxy-S-adenosyl-L-methionine synthase (241 aa).

S-adenosyl-L-methionine-binding positions include Y38, 63–65 (GCS), 88–89 (DN), 116–117 (DI), N131, and R198.

The protein belongs to the class I-like SAM-binding methyltransferase superfamily. Cx-SAM synthase family. Homodimer.

The enzyme catalyses prephenate + S-adenosyl-L-methionine = carboxy-S-adenosyl-L-methionine + 3-phenylpyruvate + H2O. Its function is as follows. Catalyzes the conversion of S-adenosyl-L-methionine (SAM) to carboxy-S-adenosyl-L-methionine (Cx-SAM). The polypeptide is Carboxy-S-adenosyl-L-methionine synthase (Histophilus somni (strain 2336) (Haemophilus somnus)).